The following is a 94-amino-acid chain: Small ubiquitin-related modifier 3 (94 aa).

A Glycyl lysine isopeptide (Lys-Gly) (interchain with G-Cter in SUMO) cross-link involves residue K11. The region spanning 15–92 (DHINLKVAGQ…IDVFQQQTGG (78 aa)) is the Ubiquitin-like domain. Residue G92 forms a Glycyl lysine isopeptide (Gly-Lys) (interchain with K-? in acceptor proteins) linkage. Residues 93–94 (LC) constitute a propeptide that is removed on maturation.

Belongs to the ubiquitin family. SUMO subfamily. As to quaternary structure, interacts with SAE2 and UBE2I. Covalently attached to a number of proteins. In terms of processing, polymeric chains can be formed through Lys-11 cross-linking. Post-translationally, cleavage of precursor form by a sentrin-specific protease is necessary for function.

It is found in the cytoplasm. Its subcellular location is the nucleus. The protein resides in the PML body. Functionally, ubiquitin-like protein which can be covalently attached to target lysines either as a monomer or as a lysine-linked polymer. Does not seem to be involved in protein degradation and may function as an antagonist of ubiquitin in the degradation process. Plays a role in a number of cellular processes such as nuclear transport, DNA replication and repair, mitosis and signal transduction. Covalent attachment to its substrates requires prior activation by the E1 complex SAE1-SAE2 and linkage to the E2 enzyme UBE2I. This is Small ubiquitin-related modifier 3 from Gallus gallus (Chicken).